A 267-amino-acid chain; its full sequence is Zerumbone synthase (267 aa).

9–33 (LVTGGASGIGESIARLFIEHGAKIC) lines the NAD(+) pocket. S142 serves as a coordination point for substrate. Y155 serves as the catalytic Proton acceptor.

Belongs to the short-chain dehydrogenases/reductases (SDR) family. In terms of tissue distribution, expressed in leaves, stems and rhizomes.

The catalysed reaction is 10-hydroxy-alpha-humulene + NAD(+) = zerumbone + NADH + H(+). Catalyzes 8-hydroxy-alpha-humulene into zerumbone in presence of NAD. Also converts borneol to camphor in vitro. Zerumbone is a highly promising multi-anticancer agent. In Zingiber zerumbet (Shampoo ginger), this protein is Zerumbone synthase (ZSD1).